Reading from the N-terminus, the 114-residue chain is Probable gas vesicle protein J2 (114 aa).

The segment covering 1-10 has biased composition (basic and acidic residues); sequence MTDLDHRYPG. Positions 1–21 are disordered; that stretch reads MTDLDHRYPGEETEPYGPPSG.

The protein belongs to the gas vesicle GvpA family. Interacts with GvpA.

Its subcellular location is the gas vesicle. In terms of biological role, a minor component of the gas vesicle, might be involved in nucleating gas vesicle formation. Gas vesicles (GV) are hollow, gas filled proteinaceous nanostructures. It is not clear what function GVs perform in soil bacteria. The protein is Probable gas vesicle protein J2 of Streptomyces coelicolor (strain ATCC BAA-471 / A3(2) / M145).